Here is a 527-residue protein sequence, read N- to C-terminus: Cytokinin dehydrogenase 3 (527 aa).

Positions 1 to 22 (MEVAMVCTRVNLLILILSLCSP) are cleaved as a signal peptide. Positions 52-231 (LFHSPSAVLK…TRARILLQEA (180 aa)) constitute an FAD-binding PCMH-type domain. FAD is bound by residues Ala-87, Gly-89, and Gly-91. A Pros-8alpha-FAD histidine modification is found at His-92. Ser-93, Gln-97, Asp-155, Thr-160, Ser-166, Ile-170, and Ile-221 together coordinate FAD. A glycan (N-linked (GlcNAc...) asparagine) is linked at Asn-413. FAD contacts are provided by Tyr-471 and Gln-509.

This sequence belongs to the oxygen-dependent FAD-linked oxidoreductase family. Monomer. FAD is required as a cofactor. Expressed in inflorescence meristems. Highly expressed in lamina joints, and mainly in the parenchyma cells and vascular bundles on the abaxial side of the lamina joint. Expressed in roots, stems, leaves and young panicles.

Its subcellular location is the endoplasmic reticulum. It catalyses the reaction N(6)-dimethylallyladenine + A + H2O = 3-methyl-2-butenal + adenine + AH2. Its function is as follows. Catalyzes the oxidation of cytokinins, a family of N(6)-substituted adenine derivatives, where the substituent is an isopentenyl group. Cytokinins are plant hormones essential for plant growth, development, and stress responses. Exhibits specific activities toward trans-zeatin (tZ) and isopentenyladenine (iP). Plays a role in lamina joint inclination. Regulates cell proliferation and vascular bundle number on the abaxial side of lamina joint. This Oryza sativa subsp. japonica (Rice) protein is Cytokinin dehydrogenase 3.